The following is a 345-amino-acid chain: Isopentenyl-diphosphate delta-isomerase (345 aa).

14–15 contributes to the substrate binding site; that stretch reads RK. Residues Ser71, 72–74, Ser102, and Asn130 each bind FMN; that span reads SMT. 102-104 is a binding site for substrate; that stretch reads SMR. Gln165 contributes to the substrate binding site. Glu166 serves as a coordination point for Mg(2+). FMN-binding positions include Lys197, Thr227, 277–279, and 298–299; these read GLK and AG.

It belongs to the IPP isomerase type 2 family. In terms of assembly, homooctamer. Dimer of tetramers. The cofactor is FMN. Requires NADPH as cofactor. It depends on Mg(2+) as a cofactor.

The protein resides in the cytoplasm. It carries out the reaction isopentenyl diphosphate = dimethylallyl diphosphate. Involved in the biosynthesis of isoprenoids. Catalyzes the 1,3-allylic rearrangement of the homoallylic substrate isopentenyl (IPP) to its allylic isomer, dimethylallyl diphosphate (DMAPP). This chain is Isopentenyl-diphosphate delta-isomerase, found in Rickettsia felis (strain ATCC VR-1525 / URRWXCal2) (Rickettsia azadi).